The chain runs to 311 residues: Sulfate adenylyltransferase subunit 2 (311 aa).

The protein belongs to the PAPS reductase family. CysD subfamily. In terms of assembly, heterodimer composed of CysD, the smaller subunit, and CysN.

It carries out the reaction sulfate + ATP + H(+) = adenosine 5'-phosphosulfate + diphosphate. It participates in sulfur metabolism; hydrogen sulfide biosynthesis; sulfite from sulfate: step 1/3. With CysN forms the ATP sulfurylase (ATPS) that catalyzes the adenylation of sulfate producing adenosine 5'-phosphosulfate (APS) and diphosphate, the first enzymatic step in sulfur assimilation pathway. APS synthesis involves the formation of a high-energy phosphoric-sulfuric acid anhydride bond driven by GTP hydrolysis by CysN coupled to ATP hydrolysis by CysD. The polypeptide is Sulfate adenylyltransferase subunit 2 (Methylobacterium sp. (strain 4-46)).